A 342-amino-acid polypeptide reads, in one-letter code: Guanine nucleotide-binding protein alpha-9 subunit (342 aa).

Residue Gly-2 is the site of N-myristoyl glycine attachment. Residue Cys-3 is the site of S-palmitoyl cysteine attachment. The region spanning 28–342 (REIKLLLLGS…IIQSILKLHY (315 aa)) is the G-alpha domain. The segment at 31 to 44 (KLLLLGSGDSGKST) is G1 motif. GTP is bound by residues 36 to 43 (GSGDSGKS), 167 to 173 (LRCRQRT), 192 to 196 (DVGGQ), 261 to 264 (NKND), and Ala-316. Mg(2+) contacts are provided by Ser-43 and Thr-173. Residues 165-173 (DVLRCRQRT) form a G2 motif region. The tract at residues 188-197 (FRLIDVGGQK) is G3 motif. Positions 257 to 264 (VLFLNKND) are G4 motif. The segment at 314 to 319 (TTATDT) is G5 motif.

Belongs to the G-alpha family. In terms of assembly, g proteins are composed of 3 units; alpha, beta and gamma. The alpha chain contains the guanine nucleotide binding site.

Its function is as follows. Guanine nucleotide-binding proteins (G proteins) are involved as modulators or transducers in various transmembrane signaling systems. G alpha-9 antagonizes broad chemotactic response. It functions rapidly following receptor stimulation to negatively regulate PI3K/PTEN, adenylyl cyclase, and guanylyl cyclase pathways. The chain is Guanine nucleotide-binding protein alpha-9 subunit (gpaI) from Dictyostelium discoideum (Social amoeba).